Here is a 358-residue protein sequence, read N- to C-terminus: Trace amine-associated receptor 7b (358 aa).

Topologically, residues 1 to 47 are extracellular; the sequence is MATDNDSFPWDQDSILSSDMFSATSTELCYENLNRSCVRSPYSPGPR. Residues asparagine 5 and asparagine 34 are each glycosylated (N-linked (GlcNAc...) asparagine). Intrachain disulfides connect cysteine 37–cysteine 201 and cysteine 120–cysteine 205. A helical membrane pass occupies residues 48 to 68; that stretch reads LILYAVFGFGAALAVCGNLLV. Residues 69 to 83 are Cytoplasmic-facing; it reads MTSILHFRQLHSPAN. The chain crosses the membrane as a helical span at residues 84-104; that stretch reads FLVVSLACADFLVGLTVMPFS. Topologically, residues 105–121 are extracellular; sequence TVRSVEGCWYFGESYCK. A helical transmembrane segment spans residues 122-143; the sequence is LHTCFDVSFCYCSIFHLCFISV. Topologically, residues 144-166 are cytoplasmic; that stretch reads DRYIAVSDPLTYPTRFTAFVSGK. A helical transmembrane segment spans residues 167–187; the sequence is CITFSWLLSTIYGFSLLYTGA. The Extracellular portion of the chain corresponds to 188 to 212; that stretch reads NEAGLEDLVSALTCVGGCQLAVNQS. N-linked (GlcNAc...) asparagine glycosylation occurs at asparagine 210. Residues 213-233 traverse the membrane as a helical segment; sequence WVFINFLLFLIPTLVMITVYS. The Cytoplasmic segment spans residues 234-274; that stretch reads KIFLIAKQQAQNIEKMSKQTARASDSYKDRVAKRERKAAKT. The helical transmembrane segment at 275–295 threads the bilayer; that stretch reads LGIAVAAFLLSWLPYFIDSII. Residues 296-309 are Extracellular-facing; that stretch reads DAFLGFITPTYVYE. Residues 310 to 333 traverse the membrane as a helical segment; sequence ILVWIAYYNSAMNPLIYAFFYPWF. Residues 334-358 are Cytoplasmic-facing; sequence RKAIKLIVSGKVLRENSSTTNLFPE.

It belongs to the G-protein coupled receptor 1 family. Specifically expressed in neurons of the olfactory epithelium.

Its subcellular location is the cell membrane. In terms of biological role, olfactory receptor specific for N,N-dimethylalkylamines trace amines, such as N,N-dimethylcyclohexylamine. Trace amine compounds are enriched in animal body fluids and act on trace amine-associated receptors (TAARs) to elicit both intraspecific and interspecific innate behaviors. Ligand-binding causes a conformation change that triggers signaling via G(s)-class of G alpha proteins (GNAL or GNAS). The polypeptide is Trace amine-associated receptor 7b (Mus musculus (Mouse)).